Consider the following 335-residue polypeptide: Phosphatidylcholine:ceramide cholinephosphotransferase 2 (335 aa).

5 helical membrane-spanning segments follow: residues 60–80, 104–124, 136–156, 200–220, and 229–249; these read LTAFLCLMLSAFLNFFLLTVI, WSVGDVLSTVSSVVAFTIIFL, FLLGAIMYGLRAVILGVTFLP, ILCGDLMFSGHTVVLTIMYFV, and LVILRYIAAPITFLGIAALVV. Histidine 210 is an active-site residue. Active-site residues include histidine 253 and aspartate 257. The helical transmembrane segment at 258-278 threads the bilayer; that stretch reads VLIAYWLTSHVFWSYHQIFEM. Residues 279–335 lie on the Cytoplasmic side of the membrane; sequence RKDDRPQAPLSRLWWFWLCYWFESDVADGKLVNKWNWPLEGPQRMHTIMNRINYKLQ.

The protein belongs to the sphingomyelin synthase family.

The protein localises to the membrane. The catalysed reaction is an N-acylsphing-4-enine + a 1,2-diacyl-sn-glycero-3-phosphocholine = a sphingomyelin + a 1,2-diacyl-sn-glycerol. It catalyses the reaction an N-acyl-15-methylhexadecasphing-4-enine + a 1,2-diacyl-sn-glycero-3-phosphocholine = an N-acyl-15-methylhexadecasphing-4-enine-1-phosphocholine + a 1,2-diacyl-sn-glycerol. It participates in lipid metabolism; sphingolipid metabolism. Functionally, sphingomyelin synthases (SM synthase or SMS) synthesize the sphingolipid sphingomyelin (SM) through transfer of the phosphatidyl head group of 1,2-diacyl-sn-glycero-3-phosphocholine (phosphatidylcholine, PC) on to the primary hydroxyl of ceramide (N-acylsphingoid base), yielding 1,2-diacyl-sn-glycerol (diacylglycerol, DAG) as a side product. Functions as a bidirectional lipid cholinephosphotransferases capable of converting PC and ceramide to SM and DAG and vice versa depending on the respective levels of ceramide and DAG as phosphocholine acceptors, respectively. This chain is Phosphatidylcholine:ceramide cholinephosphotransferase 2 (sms-2), found in Caenorhabditis elegans.